The chain runs to 493 residues: Galactose-1-phosphate uridylyltransferase 2 (493 aa).

It belongs to the galactose-1-phosphate uridylyltransferase type 2 family.

Its subcellular location is the cytoplasm. It catalyses the reaction alpha-D-galactose 1-phosphate + UDP-alpha-D-glucose = alpha-D-glucose 1-phosphate + UDP-alpha-D-galactose. The protein operates within carbohydrate metabolism; galactose metabolism. This chain is Galactose-1-phosphate uridylyltransferase 2 (galT2), found in Streptococcus pneumoniae serotype 4 (strain ATCC BAA-334 / TIGR4).